Consider the following 470-residue polypeptide: MSKKYDAGVKEYRDTYWTPDYVPLDTDLLACFKCTGQEGVPKEEVAAAVAAESSTGTWSTVWSELLTDLDFYKGRCYRIEDVPGDKESFYAFIAYPLDLFEEGSITNVLTSLVGNVFGFKALRHLRLEDIRFPIAFIKCCAGPPNGIAVERDRMNKYGRPLLGCTIKPKLGLSGKNYGRVVYECLRGGLDFTKDDENINSQPFQRWQNRFEFVAEAIKLAEQETGERKGHYLNVTANTPEEMYERAEFAKELNQPIIMHDFITGGFTANTGLSKWCRKNGMLLHIHRAMHAVIDRHPKHGIHFRVLAKCLRLSGGDQLHTGTVVGKLEGDRQTTLGYIDQLRESFVPEDRSRGNFFDQDWGSMPGVFAVASGGIHVWHMPALVAIFGDDSVLQFGGGTHGHPWGSAAGAAANRVALEACVKARNAGREIEKESRDILMEAGKHSPELAIALETWKEIKFEFDTVDKLDVQ.

The substrate site is built by asparagine 115 and threonine 165. Lysine 167 (proton acceptor) is an active-site residue. Position 169 (lysine 169) interacts with substrate. Mg(2+) contacts are provided by lysine 193, aspartate 195, and glutamate 196. N6-carboxylysine is present on lysine 193. Histidine 286 acts as the Proton acceptor in catalysis. Arginine 287, histidine 319, and serine 371 together coordinate substrate.

Belongs to the RuBisCO large chain family. Type I subfamily. In terms of assembly, heterohexadecamer of 8 large chains and 8 small chains. The cofactor is Mg(2+).

The protein resides in the carboxysome. It carries out the reaction 2 (2R)-3-phosphoglycerate + 2 H(+) = D-ribulose 1,5-bisphosphate + CO2 + H2O. The catalysed reaction is D-ribulose 1,5-bisphosphate + O2 = 2-phosphoglycolate + (2R)-3-phosphoglycerate + 2 H(+). In terms of biological role, ruBisCO catalyzes two reactions: the carboxylation of D-ribulose 1,5-bisphosphate, the primary event in carbon dioxide fixation, as well as the oxidative fragmentation of the pentose substrate in the photorespiration process. Both reactions occur simultaneously and in competition at the same active site. The chain is Ribulose bisphosphate carboxylase large chain from Synechococcus sp. (strain CC9311).